The primary structure comprises 341 residues: Phenylalanine--tRNA ligase alpha subunit (341 aa).

Glutamate 256 lines the Mg(2+) pocket.

This sequence belongs to the class-II aminoacyl-tRNA synthetase family. Phe-tRNA synthetase alpha subunit type 1 subfamily. In terms of assembly, tetramer of two alpha and two beta subunits. It depends on Mg(2+) as a cofactor.

Its subcellular location is the cytoplasm. It catalyses the reaction tRNA(Phe) + L-phenylalanine + ATP = L-phenylalanyl-tRNA(Phe) + AMP + diphosphate + H(+). This chain is Phenylalanine--tRNA ligase alpha subunit, found in Leptospira borgpetersenii serovar Hardjo-bovis (strain JB197).